Reading from the N-terminus, the 268-residue chain is uncharacterized protein (268 aa).

A disordered region spans residues 45–64 (SDTQGPAPGINGQGKPSPGA).

This is an uncharacterized protein from Aquifex aeolicus (strain VF5).